We begin with the raw amino-acid sequence, 216 residues long: uncharacterized protein (216 aa).

The helical transmembrane segment at 1 to 21 (MTIVHFVGSLFFFFFFSYIFF) threads the bilayer.

It is found in the membrane. This is an uncharacterized protein from Saccharomyces cerevisiae (strain ATCC 204508 / S288c) (Baker's yeast).